A 287-amino-acid chain; its full sequence is Probable endonuclease 4 (287 aa).

Zn(2+) is bound by residues H69, H109, E144, D178, H181, H215, D228, H230, and E260.

It belongs to the AP endonuclease 2 family. Zn(2+) serves as cofactor.

It catalyses the reaction Endonucleolytic cleavage to 5'-phosphooligonucleotide end-products.. Its function is as follows. Endonuclease IV plays a role in DNA repair. It cleaves phosphodiester bonds at apurinic or apyrimidinic (AP) sites, generating a 3'-hydroxyl group and a 5'-terminal sugar phosphate. This Thermotoga sp. (strain RQ2) protein is Probable endonuclease 4.